The chain runs to 390 residues: Nuclear receptor subfamily 2 group F member 6 (390 aa).

Over residues 1 to 15 the composition is skewed to gly residues; sequence MAMVTGGWGDPGGDT. Residues 1 to 50 form a disordered region; it reads MAMVTGGWGDPGGDTNGVDKAGGSYPRATEDDSASPPGATSDAEPGDEER. A phosphoserine mark is found at Ser35 and Ser41. Residues 54 to 129 constitute a DNA-binding region (nuclear receptor); it reads QVDCVVCGDK…VGMRKEAVQR (76 aa). The segment at 57–77 adopts an NR C4-type zinc-finger fold; sequence CVVCGDKSSGKHYGVFTCEGC. At Ser84 the chain carries Phosphoserine. The segment at 93–117 adopts an NR C4-type zinc-finger fold; that stretch reads CRSNRDCQIDQHHRNQCQYCRLKKC. In terms of domain architecture, NR LBD spans 157–380; that stretch reads PVSELIAQLL…TLIRDMLLSG (224 aa). The important for dimerization stretch occupies residues 314–390; it reads LQEKAQVALT…STFNWPYGSG (77 aa).

It belongs to the nuclear hormone receptor family. NR2 subfamily. As to quaternary structure, binds DNA as dimer; homodimer and heterodimer with NR2F2 and probably NR2F1. Interacts with THRB.

Its subcellular location is the nucleus. Transcription factor predominantly involved in transcriptional repression. Binds to promoter/enhancer response elements that contain the imperfect 5'-AGGTCA-3' direct or inverted repeats with various spacings which are also recognized by other nuclear hormone receptors. Involved in modulation of hormonal responses. Represses transcriptional activity of the lutropin-choriogonadotropic hormone receptor/LHCGR gene, the renin/REN gene and the oxytocin-neurophysin/OXT gene. Represses the triiodothyronine-dependent and -independent transcriptional activity of the thyroid hormone receptor gene in a cell type-specific manner. The corepressing function towards thyroid hormone receptor beta/THRB involves at least in part the inhibition of THRB binding to triiodothyronine response elements (TREs) by NR2F6. Inhibits NFATC transcription factor DNA binding and subsequently its transcriptional activity. Acts as transcriptional repressor of IL-17 expression in Th-17 differentiated CD4(+) T cells and may be involved in induction and/or maintenance of peripheral immunological tolerance and autoimmunity. Involved in development of forebrain circadian clock; is required early in the development of the locus coeruleus (LC). This Mus musculus (Mouse) protein is Nuclear receptor subfamily 2 group F member 6 (Nr2f6).